The primary structure comprises 151 residues: Large-conductance mechanosensitive channel (151 aa).

2 helical membrane passes run 12–32 (GNIVDLAVAVVIGTAFTALVT) and 71–91 (VLLSAAINFFLIAFAVYFLVV). The disordered stretch occupies residues 122–151 (AQTNGDSPGRHGGRGTPSPTDGPRASTESQ).

This sequence belongs to the MscL family. In terms of assembly, homopentamer.

Its subcellular location is the cell membrane. Channel that opens in response to stretch forces in the membrane lipid bilayer. May participate in the regulation of osmotic pressure changes within the cell. The protein is Large-conductance mechanosensitive channel of Mycobacterium tuberculosis (strain CDC 1551 / Oshkosh).